Consider the following 521-residue polypeptide: Protein nucleotidyltransferase YdiU (521 aa).

Glycine 109, glycine 111, arginine 112, lysine 131, aspartate 143, glycine 144, arginine 194, and arginine 201 together coordinate ATP. Aspartate 270 acts as the Proton acceptor in catalysis. Residues asparagine 271 and aspartate 280 each contribute to the Mg(2+) site. Residue aspartate 280 coordinates ATP.

It belongs to the SELO family. The cofactor is Mg(2+). Requires Mn(2+) as cofactor.

The enzyme catalyses L-seryl-[protein] + ATP = 3-O-(5'-adenylyl)-L-seryl-[protein] + diphosphate. The catalysed reaction is L-threonyl-[protein] + ATP = 3-O-(5'-adenylyl)-L-threonyl-[protein] + diphosphate. It catalyses the reaction L-tyrosyl-[protein] + ATP = O-(5'-adenylyl)-L-tyrosyl-[protein] + diphosphate. It carries out the reaction L-histidyl-[protein] + UTP = N(tele)-(5'-uridylyl)-L-histidyl-[protein] + diphosphate. The enzyme catalyses L-seryl-[protein] + UTP = O-(5'-uridylyl)-L-seryl-[protein] + diphosphate. The catalysed reaction is L-tyrosyl-[protein] + UTP = O-(5'-uridylyl)-L-tyrosyl-[protein] + diphosphate. In terms of biological role, nucleotidyltransferase involved in the post-translational modification of proteins. It can catalyze the addition of adenosine monophosphate (AMP) or uridine monophosphate (UMP) to a protein, resulting in modifications known as AMPylation and UMPylation. The chain is Protein nucleotidyltransferase YdiU from Burkholderia mallei (strain ATCC 23344).